Consider the following 853-residue polypeptide: Envelope glycoprotein gp160 (853 aa).

Positions 1–31 (MRARGIERNCQNWWKWGIMLLGILMTCSAAD) are cleaved as a signal peptide. The Extracellular segment spans residues 32 to 681 (NLWVTVYYGV…ITQWLWYIKI (650 aa)). C53 and C73 are joined by a disulfide. N-linked (GlcNAc...) asparagine; by host glycans are attached at residues N87, N129, N137, N143, N153, N157, N183, N188, N198, N235, N242, N263, N277, and N290. Disulfide bonds link C118/C206, C125/C197, C130/C154, C219/C248, and C229/C240. The tract at residues 130 to 153 (CSDELRNNGTMGNNVTTEEKGMKN) is V1. Positions 154 to 197 (CSFNVTTVLKDKKQQVYALFYRLDIVPIDNDSSTNSTNYRLINC) are V2. The V3 stretch occupies residues 297–329 (CARPYQNTRQRTPIGLGQSLYTTRSRSIIGQAH). C297 and C330 are oxidised to a cystine. Residues N331 and N353 are each glycosylated (N-linked (GlcNAc...) asparagine; by host). The CD4-binding loop stretch occupies residues 362–372 (SSGGDPEITTH). Cystine bridges form between C376/C442 and C383/C416. The V4 stretch occupies residues 383 to 416 (CNTSGLFNSTWNISAWNNITESNNSTNTNITLQC). N-linked (GlcNAc...) asparagine; by host glycans are attached at residues N384, N390, N394, N400, N405, N406, N411, N445, N458, N459, and N462. V5 regions lie at residues 457 to 468 (INNSTNETFRPG) and 460 to 468 (STNETFRPG). Residues 509–529 (AIGLGAMFLGFLGAAGSTMGA) are fusion peptide. Residues 571–589 (KQLQARILAVERYLKDQQL) form an immunosuppression region. Cysteines 595 and 601 form a disulfide. Residues N608, N613, N622, and N634 are each glycosylated (N-linked (GlcNAc...) asparagine; by host). The stretch at 630-664 (REIDNYTGLIYSLIEESQTQQEKNEKELLELDKWA) forms a coiled coil. The MPER; binding to GalCer stretch occupies residues 659 to 680 (ELDKWASLWNWFSITQWLWYIK). Residues 682-702 (FIMIIGGLIGLRIVFAVLSLV) traverse the membrane as a helical segment. Topologically, residues 703–853 (NRVRQGYSPL…IRQGLERSLL (151 aa)) are cytoplasmic. Residues 709 to 712 (YSPL) carry the YXXL motif; contains endocytosis signal motif. Positions 716 to 738 (TLLPAPRGPDRPEGTEEEGGERG) are disordered. Positions 723-738 (GPDRPEGTEEEGGERG) are enriched in basic and acidic residues. Residues C761 and C834 are each lipidated (S-palmitoyl cysteine; by host). The Di-leucine internalization motif motif lies at 852–853 (LL).

The protein belongs to the HIV-1 env protein family. In terms of assembly, the mature envelope protein (Env) consists of a homotrimer of non-covalently associated gp120-gp41 heterodimers. The resulting complex protrudes from the virus surface as a spike. There seems to be as few as 10 spikes on the average virion. Interacts with host CD4, CCR5 and CXCR4. Gp120 also interacts with the C-type lectins CD209/DC-SIGN and CLEC4M/DC-SIGNR (collectively referred to as DC-SIGN(R)). Gp120 and gp41 interact with GalCer. Gp120 interacts with host ITGA4/ITGB7 complex; on CD4+ T-cells, this interaction results in rapid activation of integrin ITGAL/LFA-1, which facilitates efficient cell-to-cell spreading of HIV-1. Gp120 interacts with cell-associated heparan sulfate; this interaction increases virus infectivity on permissive cells and may be involved in infection of CD4- cells. The mature envelope protein (Env) consists of a homotrimer of non-covalently associated gp120-gp41 heterodimers. The resulting complex protrudes from the virus surface as a spike. There seems to be as few as 10 spikes on the average virion. Highly glycosylated by host. The high number of glycan on the protein is reffered to as 'glycan shield' because it contributes to hide protein sequence from adaptive immune system. Post-translationally, palmitoylation of the transmembrane protein and of Env polyprotein (prior to its proteolytic cleavage) is essential for their association with host cell membrane lipid rafts. Palmitoylation is therefore required for envelope trafficking to classical lipid rafts, but not for viral replication. In terms of processing, specific enzymatic cleavages in vivo yield mature proteins. Envelope glycoproteins are synthesized as an inactive precursor that is heavily N-glycosylated and processed likely by host cell furin in the Golgi to yield the mature SU and TM proteins. The cleavage site between SU and TM requires the minimal sequence [KR]-X-[KR]-R. About 2 of the 9 disulfide bonds of gp41 are reduced by P4HB/PDI, following binding to CD4 receptor.

Its subcellular location is the virion membrane. It is found in the host cell membrane. It localises to the host endosome membrane. In terms of biological role, oligomerizes in the host endoplasmic reticulum into predominantly trimers. In a second time, gp160 transits in the host Golgi, where glycosylation is completed. The precursor is then proteolytically cleaved in the trans-Golgi and thereby activated by cellular furin or furin-like proteases to produce gp120 and gp41. Functionally, attaches the virus to the host lymphoid cell by binding to the primary receptor CD4. This interaction induces a structural rearrangement creating a high affinity binding site for a chemokine coreceptor like CXCR4 and/or CCR5. Acts as a ligand for CD209/DC-SIGN and CLEC4M/DC-SIGNR, which are respectively found on dendritic cells (DCs), and on endothelial cells of liver sinusoids and lymph node sinuses. These interactions allow capture of viral particles at mucosal surfaces by these cells and subsequent transmission to permissive cells. HIV subverts the migration properties of dendritic cells to gain access to CD4+ T-cells in lymph nodes. Virus transmission to permissive T-cells occurs either in trans (without DCs infection, through viral capture and transmission), or in cis (following DCs productive infection, through the usual CD4-gp120 interaction), thereby inducing a robust infection. In trans infection, bound virions remain infectious over days and it is proposed that they are not degraded, but protected in non-lysosomal acidic organelles within the DCs close to the cell membrane thus contributing to the viral infectious potential during DCs' migration from the periphery to the lymphoid tissues. On arrival at lymphoid tissues, intact virions recycle back to DCs' cell surface allowing virus transmission to CD4+ T-cells. Its function is as follows. Acts as a class I viral fusion protein. Under the current model, the protein has at least 3 conformational states: pre-fusion native state, pre-hairpin intermediate state, and post-fusion hairpin state. During fusion of viral and target intracellular membranes, the coiled coil regions (heptad repeats) assume a trimer-of-hairpins structure, positioning the fusion peptide in close proximity to the C-terminal region of the ectodomain. The formation of this structure appears to drive apposition and subsequent fusion of viral and target cell membranes. Complete fusion occurs in host cell endosomes and is dynamin-dependent, however some lipid transfer might occur at the plasma membrane. The virus undergoes clathrin-dependent internalization long before endosomal fusion, thus minimizing the surface exposure of conserved viral epitopes during fusion and reducing the efficacy of inhibitors targeting these epitopes. Membranes fusion leads to delivery of the nucleocapsid into the cytoplasm. The polypeptide is Envelope glycoprotein gp160 (Human immunodeficiency virus type 1 group M subtype D (isolate ELI) (HIV-1)).